A 141-amino-acid chain; its full sequence is Hemoglobin subunit alpha (141 aa).

Positions 1–141 (VLSPADKSNV…VSTVLTSKYR (141 aa)) constitute a Globin domain. Position 3 is a phosphoserine (serine 3). N6-succinyllysine is present on residues lysine 7 and lysine 11. Position 16 is an N6-acetyllysine; alternate (lysine 16). Residue lysine 16 is modified to N6-succinyllysine; alternate. Residue tyrosine 24 is modified to Phosphotyrosine. Position 35 is a phosphoserine (serine 35). Lysine 40 carries the post-translational modification N6-succinyllysine. Serine 49 bears the Phosphoserine mark. Histidine 58 contacts O2. Histidine 87 provides a ligand contact to heme b. Serine 102 carries the phosphoserine modification. Position 108 is a phosphothreonine (threonine 108). Phosphoserine occurs at positions 124 and 131. 2 positions are modified to phosphothreonine: threonine 134 and threonine 137. Serine 138 bears the Phosphoserine mark.

This sequence belongs to the globin family. As to quaternary structure, heterotetramer of two alpha chains and two beta chains. In terms of tissue distribution, red blood cells.

Functionally, involved in oxygen transport from the lung to the various peripheral tissues. Its function is as follows. Hemopressin acts as an antagonist peptide of the cannabinoid receptor CNR1. Hemopressin-binding efficiently blocks cannabinoid receptor CNR1 and subsequent signaling. This chain is Hemoglobin subunit alpha (HBA), found in Saguinus mystax (Moustached tamarin).